The chain runs to 326 residues: Beta-ketoacyl-[acyl-carrier-protein] synthase III 2 (326 aa).

Catalysis depends on residues C114 and H251. An ACP-binding region spans residues 252-256 (SANAR). N281 is an active-site residue.

It belongs to the thiolase-like superfamily. FabH family. In terms of assembly, homodimer.

It localises to the cytoplasm. The enzyme catalyses malonyl-[ACP] + acetyl-CoA + H(+) = 3-oxobutanoyl-[ACP] + CO2 + CoA. The protein operates within lipid metabolism; fatty acid biosynthesis. Catalyzes the condensation reaction of fatty acid synthesis by the addition to an acyl acceptor of two carbons from malonyl-ACP. Catalyzes the first condensation reaction which initiates fatty acid synthesis and may therefore play a role in governing the total rate of fatty acid production. Possesses both acetoacetyl-ACP synthase and acetyl transacylase activities. Its substrate specificity determines the biosynthesis of branched-chain and/or straight-chain of fatty acids. In Staphylococcus epidermidis (strain ATCC 12228 / FDA PCI 1200), this protein is Beta-ketoacyl-[acyl-carrier-protein] synthase III 2.